The following is a 347-amino-acid chain: Protein-glutamate methylesterase/protein-glutamine glutaminase (347 aa).

The region spanning 3–119 (EALVVDDSHF…STELSGHSEE (117 aa)) is the Response regulatory domain. Asp53 bears the 4-aspartylphosphate mark. The tract at residues 132–154 (PTAGHDVEMEPASPPDATTSEYA) is disordered. Residues 152–346 (EYADNPTLLI…EAIADSIRRT (195 aa)) form the CheB-type methylesterase domain. Residues Ser164, His191, and Asp288 contribute to the active site.

It belongs to the CheB family. In terms of processing, phosphorylated by CheA. Phosphorylation of the N-terminal regulatory domain activates the methylesterase activity.

The protein localises to the cytoplasm. The catalysed reaction is [protein]-L-glutamate 5-O-methyl ester + H2O = L-glutamyl-[protein] + methanol + H(+). The enzyme catalyses L-glutaminyl-[protein] + H2O = L-glutamyl-[protein] + NH4(+). Its function is as follows. Involved in the modulation of the chemotaxis system; catalyzes the demethylation of specific methylglutamate residues introduced into the Htr transducer proteins (methyl-accepting chemotaxis proteins) by CheR. Also required for Htr deamidations, at least at a specific glutamine-glutamate pair in HTR-II and a specific aspartate-glutamine pair in Htr4. The sequence is that of Protein-glutamate methylesterase/protein-glutamine glutaminase from Halobacterium salinarum (strain ATCC 29341 / DSM 671 / R1).